A 256-amino-acid chain; its full sequence is Ubiquinone/menaquinone biosynthesis C-methyltransferase UbiE (256 aa).

Residues 1 to 12 (MNDQRKGDHAEP) are compositionally biased toward basic and acidic residues. A disordered region spans residues 1 to 22 (MNDQRKGDHAEPTTHFGYQDVP). S-adenosyl-L-methionine is bound by residues Thr79, Asp100, and 128-129 (DA).

Belongs to the class I-like SAM-binding methyltransferase superfamily. MenG/UbiE family.

The catalysed reaction is a 2-demethylmenaquinol + S-adenosyl-L-methionine = a menaquinol + S-adenosyl-L-homocysteine + H(+). It catalyses the reaction a 2-methoxy-6-(all-trans-polyprenyl)benzene-1,4-diol + S-adenosyl-L-methionine = a 5-methoxy-2-methyl-3-(all-trans-polyprenyl)benzene-1,4-diol + S-adenosyl-L-homocysteine + H(+). It participates in quinol/quinone metabolism; menaquinone biosynthesis; menaquinol from 1,4-dihydroxy-2-naphthoate: step 2/2. Its pathway is cofactor biosynthesis; ubiquinone biosynthesis. Methyltransferase required for the conversion of demethylmenaquinol (DMKH2) to menaquinol (MKH2) and the conversion of 2-polyprenyl-6-methoxy-1,4-benzoquinol (DDMQH2) to 2-polyprenyl-3-methyl-6-methoxy-1,4-benzoquinol (DMQH2). The chain is Ubiquinone/menaquinone biosynthesis C-methyltransferase UbiE from Pseudomonas putida (Arthrobacter siderocapsulatus).